The primary structure comprises 181 residues: Ribosome maturation factor RimM (181 aa).

The PRC barrel domain maps to 98 to 177 (EGEFFYCDLI…KITTHNAKTL (80 aa)).

It belongs to the RimM family. Binds ribosomal protein uS19.

The protein resides in the cytoplasm. In terms of biological role, an accessory protein needed during the final step in the assembly of 30S ribosomal subunit, possibly for assembly of the head region. Essential for efficient processing of 16S rRNA. May be needed both before and after RbfA during the maturation of 16S rRNA. It has affinity for free ribosomal 30S subunits but not for 70S ribosomes. The chain is Ribosome maturation factor RimM from Helicobacter pylori (strain J99 / ATCC 700824) (Campylobacter pylori J99).